Reading from the N-terminus, the 60-residue chain is Cytotoxin 5 (60 aa).

4 disulfides stabilise this stretch: Cys3/Cys21, Cys14/Cys38, Cys42/Cys53, and Cys54/Cys59.

Belongs to the three-finger toxin family. Short-chain subfamily. Type IA cytotoxin sub-subfamily. Monomer in solution; Homodimer and oligomer in the presence of negatively charged lipids forming a pore with a size ranging between 20 and 30 Angstroms. As to expression, expressed by the venom gland.

Its subcellular location is the secreted. The protein localises to the target cell membrane. In terms of biological role, shows cytolytic activity on many different cells by forming pore in lipid membranes. In vivo, increases heart rate or kills the animal by cardiac arrest. In addition, it binds to heparin with high affinity, interacts with Kv channel-interacting protein 1 (KCNIP1) in a calcium-independent manner, and binds to integrin alpha-V/beta-3 (ITGAV/ITGB3) with moderate affinity. The chain is Cytotoxin 5 from Naja annulifera (Banded Egyptian cobra).